A 118-amino-acid polypeptide reads, in one-letter code: p-cumate 2,3-dioxygenase system, ferredoxin component (118 aa).

Residues 14-111 (VGLCATDDVA…VTVEGGQIFV (98 aa)) enclose the Rieske domain. [2Fe-2S] cluster is bound by residues Cys54, His56, Cys74, and His77.

It belongs to the bacterial ring-hydroxylating dioxygenase ferredoxin component family. The p-cumate 2,3-dioxygenase multicomponent enzyme system is composed of an electron transfer component and a dioxygenase component (iron sulfur protein (ISP)). The electron transfer component is composed of a ferredoxin reductase (CmtAa) and a ferredoxin (CmtAd), and the dioxygenase component is formed of a large alpha subunit (CmtAb) and a small beta subunit (CmtAc). The cofactor is [2Fe-2S] cluster.

It participates in aromatic compound metabolism; p-cumate degradation; acetaldehyde and pyruvate from p-cumate. Component of the p-cumate 2,3-dioxygenase multicomponent enzyme system which catalyzes the incorporation of both atoms of molecular oxygen into p-cumate to form cis-2,3-dihydroxy-2,3-dihydro-p-cumate. Functions as an intermediate electron transfer protein via a specific interaction with iron sulfur protein components (ISP)(CmtAb and CmtAc). In Pseudomonas putida (Arthrobacter siderocapsulatus), this protein is p-cumate 2,3-dioxygenase system, ferredoxin component.